The primary structure comprises 304 residues: MRLPIFLDTDPGIDDAVAIAAAIFAPELDLQLMTTVAGNVSVEKTTRNALQLLHFWNAEIPLAQGAAVPLVRAPRDAASVHGESGMAGYDFVEHNRKPLGIPAFLAIRDALMRAPEPVTLVAIGPLTNIALLLSQCPECKPYIRRLVIMGGSAGRGNCTPNAEFNIAADPEAAACVFRSGIEIVMCGLDVTNQAILTPDYLATLPELNRTGKMLHALFSHYRSGSMQSGLRMHDLCAIAWLVRPDLFTLKPCFVAVETQGEFTSGTTVVDIDGCLGKPANVKVALDLDVKGFQQWVAEVLALAS.

Residue H233 is part of the active site.

It belongs to the IUNH family. RihC subfamily.

Hydrolyzes both purine and pyrimidine ribonucleosides with a broad-substrate specificity. This Escherichia coli O8 (strain IAI1) protein is Non-specific ribonucleoside hydrolase RihC.